The primary structure comprises 215 residues: 25 kDa ookinete surface antigen (215 aa).

The N-terminal stretch at Met-1 to Leu-16 is a signal peptide. The 30-residue stretch at Cys-29–Glu-58 folds into the EGF-like 1; truncated domain. EGF-like domains follow at residues Asn-59–Val-104, Val-104–Thr-148, and Gly-151–Ile-191. 9 cysteine pairs are disulfide-bonded: Cys-63-Cys-78, Cys-72-Cys-90, Cys-92-Cys-103, Cys-108-Cys-118, Cys-113-Cys-131, Cys-133-Cys-147, Cys-155-Cys-166, Cys-159-Cys-175, and Cys-177-Cys-190. N-linked (GlcNAc...) asparagine glycosylation is found at Asn-144 and Asn-163. A lipid anchor (GPI-anchor amidated serine) is attached at Ser-192. The propeptide at Phe-193 to Ile-215 is removed in mature form. An N-linked (GlcNAc...) asparagine glycan is attached at Asn-200.

The protein localises to the cell membrane. The polypeptide is 25 kDa ookinete surface antigen (Plasmodium gallinaceum).